The following is a 530-amino-acid chain: Probable basic-leucine zipper transcription factor L (530 aa).

Composition is skewed to low complexity over residues 1–17 and 24–39; these read MYSP…SPES and SINN…ANQS. The disordered stretch occupies residues 1-76; the sequence is MYSPSSPQSS…QSAALSRSRK (76 aa). One can recognise a bZIP domain in the interval 55–118; that stretch reads VKKRQVRLLK…FETKSRLEFL (64 aa). A basic motif region spans residues 56–77; the sequence is KKRQVRLLKNRQSAALSRSRKK. Residues 83 to 104 are leucine-zipper; that stretch reads LESKAQELTHSTQELHVQYNKI. Disordered regions lie at residues 142 to 177, 216 to 258, and 389 to 481; these read NNIK…TTPV, SQNK…SPTP, and HHHH…SQIN. 2 stretches are compositionally biased toward low complexity: residues 149–176 and 220–247; these read RSNS…STTP and NNNN…NTTN. The span at 248–257 shows a compositional bias: polar residues; that stretch reads LLDQQQQSPT. Residues 436–478 are compositionally biased toward low complexity; it reads SSSPSSSSTSSPSTSSPSTPKSMGFPSPIFIGSSGSGPSSSGS.

The protein belongs to the bZIP family.

It is found in the nucleus. Functionally, probable transcriptional regulator. The polypeptide is Probable basic-leucine zipper transcription factor L (bzpL) (Dictyostelium discoideum (Social amoeba)).